A 305-amino-acid polypeptide reads, in one-letter code: Ribosomal RNA small subunit methyltransferase H (305 aa).

Residues 33–35, Asp-52, Asp-97, and Gln-104 each bind S-adenosyl-L-methionine; that span reads GGH.

The protein belongs to the methyltransferase superfamily. RsmH family.

The protein resides in the cytoplasm. The catalysed reaction is cytidine(1402) in 16S rRNA + S-adenosyl-L-methionine = N(4)-methylcytidine(1402) in 16S rRNA + S-adenosyl-L-homocysteine + H(+). Functionally, specifically methylates the N4 position of cytidine in position 1402 (C1402) of 16S rRNA. This is Ribosomal RNA small subunit methyltransferase H from Campylobacter lari (strain RM2100 / D67 / ATCC BAA-1060).